A 914-amino-acid polypeptide reads, in one-letter code: MDWGLFLHCAALTFTLSRALRSDKCGDTIKILSPGYLTSPGYPQSYHPSQKCEWLIQAPEPYQRIMINFNPHFDLEDRDCKYDYVEVIDGDNAEGRLWGKYCGKIAPPPLVSSGPYLFIKFVSDYETHGAGFSIRYEVFKRGPECSRNFTSSSGMIKSPGFPEKYPNSLECTYIIFAPKMSEIILEFESFELEPDSNTPGGAFCRYDRLEIWDGFPDVGPHIGRYCGQNNPGRVRSSTGILSMVFYTDSAIAKEGFSANYSVSQSSVSEDFQCMEPLGMESGEIHSDQITVSSQYSAIWSSERSRLNYPENGWTPGEDSVREWIQVDLGLLRFVSGIGTQGAISKETKKEYYLKTYRVDVSSNGEDWITLKEGNKPVVFQGNSNPTDVVYRPFPKPVLTRFVRIKPVSWENGVSLRFEVYGCKITDYPCSGMLGMVSGLIPDSQITASTQVDRNWIPENARLITSRSGWALPPTTHPYTNEWLQIDLGEEKIVRGIIVQGGKHRENKVFMKKFKIGYSNNGSDWKMIMDSSKKKIKTFEGNTNYDTPELRTFEPVSTRIIRVYPERATHAGLGLRMELLGCELEAPTAVPTVSEGKPVDECDDDQANCHSGTGGTTVLNTEKPTVIDNTVQPELPPYNLNCGFGWGSHKTLCQWEHDNQVDLKWAILTSKTGPIQDHTGDGNFIYSQADESQKGKVARLLSPIIYSQNSAHCMTFWYHMSGPHVGTLKIKLRYQKPDEYDQVLLSLNGHQANCWQEGRVLLHKSVKLYQVVIEGEIGKGNGGIAVDDINIDNHISQEDCQKSTDVESEIVEEDPESNQTGFTPSYRTDEDYDDISRKPGNVLKTLDPILITIIAMSALGVLLGAICGVVLYCACWHNGMSERNLSALENYNFELVDGVKLKKDKLNTQNSYSEA.

An N-terminal signal peptide occupies residues 1-18; the sequence is MDWGLFLHCAALTFTLSR. Over 20 to 847 the chain is Extracellular; sequence LRSDKCGDTI…PGNVLKTLDP (828 aa). Cystine bridges form between cysteine 25–cysteine 52, cysteine 80–cysteine 102, and cysteine 145–cysteine 171. CUB domains lie at 25–139 and 145–263; these read CGDT…YEVF and CSRN…YSVS. An N-linked (GlcNAc...) asparagine glycan is attached at asparagine 148. 3 residues coordinate Ca(2+): glutamate 193, aspartate 207, and aspartate 248. Cysteine 204 and cysteine 226 are disulfide-bonded. N-linked (GlcNAc...) asparagine glycosylation occurs at asparagine 259. Disulfide bonds link cysteine 273–cysteine 422 and cysteine 429–cysteine 581. F5/8 type C domains lie at 273 to 422 and 429 to 581; these read CMEP…VYGC and CSGM…LLGC. The N-linked (GlcNAc...) asparagine glycan is linked to asparagine 520. A glycan (O-linked (Xyl...) (chondroitin sulfate) serine; alternate) is linked at serine 610. Serine 610 carries an O-linked (Xyl...) (heparan sulfate) serine; alternate glycan. Residues 636 to 801 form the MAM domain; the sequence is PYNLNCGFGW…NHISQEDCQK (166 aa). Residues 809 to 829 form a disordered region; sequence IVEEDPESNQTGFTPSYRTDE. Positions 816 to 825 are enriched in polar residues; the sequence is SNQTGFTPSY. A glycan (N-linked (GlcNAc...) asparagine) is linked at asparagine 817. Residues 848–870 form a helical membrane-spanning segment; it reads ILITIIAMSALGVLLGAICGVVL. Over 871 to 914 the chain is Cytoplasmic; that stretch reads YCACWHNGMSERNLSALENYNFELVDGVKLKKDKLNTQNSYSEA.

The protein belongs to the neuropilin family. In terms of assembly, homodimer, and heterodimer. Developing nervous system; optic tectum (layers D and E of SGFS), amacrine cells of retina, neurites of dorsal root ganglia. Also expressed in non-neuronal cells, e.g. blood vessels in the entire embryo.

The protein localises to the mitochondrion membrane. It localises to the cell membrane. Functionally, receptor involved in the development of the cardiovascular system, in angiogenesis, in the formation of certain neuronal circuits and in organogenesis outside the nervous system. Mediates the chemorepulsant activity of semaphorins. Binding to VEGFA initiates a signaling pathway needed for motor neuron axon guidance and cell body migration, including for the caudal migration of facial motor neurons from rhombomere 4 to rhombomere 6 during embryonic development. Regulates mitochondrial iron transport via interaction. The polypeptide is Neuropilin-1 (NRP1) (Gallus gallus (Chicken)).